Here is a 932-residue protein sequence, read N- to C-terminus: Beta-mannosidase A (932 aa).

A signal peptide spans 1–21 (MRIREQTILALLSPGLPPVTG). N-linked (GlcNAc...) asparagine glycosylation is found at N40, N248, N283, N317, and N348. E480 functions as the Proton donor in the catalytic mechanism. N-linked (GlcNAc...) asparagine glycosylation is found at N538, N609, N632, N659, N739, N762, and N791.

The protein belongs to the glycosyl hydrolase 2 family. Beta-mannosidase A subfamily. In terms of assembly, homodimer.

Its subcellular location is the secreted. It carries out the reaction Hydrolysis of terminal, non-reducing beta-D-mannose residues in beta-D-mannosides.. Its pathway is glycan metabolism; N-glycan degradation. Functionally, exoglycosidase that cleaves the single beta-linked mannose residue from the non-reducing end of beta-mannosidic oligosaccharides of various complexity and length. Involved in the degradation of polymeric mannan and galactomannan. The polypeptide is Beta-mannosidase A (mndA) (Aspergillus clavatus (strain ATCC 1007 / CBS 513.65 / DSM 816 / NCTC 3887 / NRRL 1 / QM 1276 / 107)).